Consider the following 476-residue polypeptide: mRNA cap guanine-N(7) methyltransferase (476 aa).

A compositionally biased stretch (basic and acidic residues) spans 1–14 (MANSTKAEEYEKMS). Residues 1 to 128 (MANSTKAEEY…TGDGTQNKRK (128 aa)) form a disordered region. A compositionally biased stretch (polar residues) spans 20–50 (ASVNSEAESSFSINENTTASGTGLSGKTSVC). Phosphoserine occurs at positions 24, 28, and 29. Basic and acidic residues-rich tracts occupy residues 54–68 (DTAR…DLVK), 84–93 (LDPEIVPEEK), and 107–117 (RETEDVPKDEY). Position 118 is a phosphoserine (Ser-118). The short motif at 126-128 (KRK) is the Nuclear localization signal element. The mRNA cap 0 methyltransferase domain maps to 167–475 (SRIFYLRNFN…IYLVFAFEKQ (309 aa)). Position 176–177 (176–177 (NN)) interacts with mRNA. Lys-180, Gly-205, Asp-227, Asp-261, Gln-284, and Tyr-289 together coordinate S-adenosyl-L-methionine.

This sequence belongs to the class I-like SAM-binding methyltransferase superfamily. mRNA cap 0 methyltransferase family. Interacts with importin alpha, leading to stimulate both RNA-binding and methyltransferase activity. Interaction with importin alpha and beta is required for its nuclear localization, importin beta dissociating in response to RanGTP, allowing RNMT-importin alpha to bind RNA substrates. Interacts with elongating form of polymerase II and RNGTT. Interacts with RAMAC, this interaction significantly enhances RNA-binding and cap methyltransferase activity.

Its subcellular location is the nucleus. It carries out the reaction a 5'-end (5'-triphosphoguanosine)-ribonucleoside in mRNA + S-adenosyl-L-methionine = a 5'-end (N(7)-methyl 5'-triphosphoguanosine)-ribonucleoside in mRNA + S-adenosyl-L-homocysteine. Methyltransferase activity is activated by RAMAC. Functionally, catalytic subunit of the mRNA-capping methyltransferase RNMT:RAMAC complex that methylates the N7 position of the added guanosine to the 5'-cap structure of mRNAs. Binds RNA containing 5'-terminal GpppC. The chain is mRNA cap guanine-N(7) methyltransferase (RNMT) from Macaca fascicularis (Crab-eating macaque).